Consider the following 228-residue polypeptide: Vacuolar-sorting protein snf7 (228 aa).

Coiled coils occupy residues 25 to 94 and 125 to 226; these read ILGL…QINA and EKVD…QAEM.

The protein belongs to the SNF7 family. As to quaternary structure, a component of the endosomal sorting required for transport complex III (ESCRT-III).

It is found in the cytoplasm. The protein resides in the endosome membrane. Required for the sorting and concentration of proteins resulting in the entry of these proteins into the invaginating vesicles of the multivesicular body (MVB). Also required for the proteolytic cleavage of the transcription factor pacc-1 in response to alkaline ambient pH. This is Vacuolar-sorting protein snf7 (vsp-3) from Neurospora crassa (strain ATCC 24698 / 74-OR23-1A / CBS 708.71 / DSM 1257 / FGSC 987).